Reading from the N-terminus, the 181-residue chain is Putative adenylate kinase (181 aa).

ATP-binding residues include glycine 10, glycine 12, lysine 13, serine 14, and threonine 15. The interval asparagine 35–valine 58 is NMP. Positions serine 106 to glutamate 116 are LID. 2 residues coordinate ATP: arginine 107 and lysine 147.

The protein belongs to the adenylate kinase family. AK6 subfamily. As to quaternary structure, interacts with uS11. Not a structural component of 40S pre-ribosomes, but transiently interacts with them by binding to uS11.

The catalysed reaction is AMP + ATP = 2 ADP. It carries out the reaction ATP + H2O = ADP + phosphate + H(+). Its function is as follows. Broad-specificity nucleoside monophosphate (NMP) kinase that catalyzes the reversible transfer of the terminal phosphate group between nucleoside triphosphates and monophosphates. Also has ATPase activity. Involved in the late maturation steps of the 30S ribosomal particles, specifically 16S rRNA maturation. While NMP activity is not required for ribosome maturation, ATPase activity is. Associates transiently with small ribosomal subunit protein uS11. ATP hydrolysis breaks the interaction with uS11. May temporarily remove uS11 from the ribosome to enable a conformational change of the ribosomal RNA that is needed for the final maturation step of the small ribosomal subunit. This chain is Putative adenylate kinase, found in Methanococcus maripaludis (strain C7 / ATCC BAA-1331).